The primary structure comprises 347 residues: Protein XRP2 (347 aa).

The span at 1–11 shows a compositional bias: basic residues; sequence MGCCFTKRRKS. Positions 1 to 22 are disordered; it reads MGCCFTKRRKSEKAEGEEEQPK. The N-myristoyl glycine moiety is linked to residue glycine 2. The S-palmitoyl cysteine moiety is linked to residue cysteine 3. Residues 21 to 176 form the C-CAP/cofactor C-like domain; that stretch reads PKLYSWDQRE…IWSHVHDFTP (156 aa). GTP-binding positions include 95-96 and 112-115; these read GS and QQFR.

Belongs to the TBCC family. Found in a complex with ARL3, RP2 and UNC119 (or UNC119B); RP2 induces hydrolysis of GTP ARL3 in the complex, leading to the release of UNC119 (or UNC119B). Interacts with ARL3; interaction is direct and stimulated with the activated GTP-bound form of ARL3. Post-translationally, myristoylated on Gly-2; which may be required for membrane targeting. Palmitoylated on Cys-3; which may be required for plasma membrane targeting. In terms of tissue distribution, retina (at protein level).

Its subcellular location is the cell membrane. The protein resides in the cell projection. It localises to the cilium. In terms of biological role, acts as a GTPase-activating protein (GAP) involved in trafficking between the Golgi and the ciliary membrane. Involved in localization of proteins, such as NPHP3, to the cilium membrane by inducing hydrolysis of GTP ARL3, leading to the release of UNC119 (or UNC119B). Acts as a GTPase-activating protein (GAP) for tubulin in concert with tubulin-specific chaperone C, but does not enhance tubulin heterodimerization. Acts as a guanine nucleotide dissociation inhibitor towards ADP-ribosylation factor-like proteins. This chain is Protein XRP2 (Rp2), found in Mus musculus (Mouse).